We begin with the raw amino-acid sequence, 108 residues long: UPF0235 protein RPB_0109 (108 aa).

Belongs to the UPF0235 family.

This Rhodopseudomonas palustris (strain HaA2) protein is UPF0235 protein RPB_0109.